A 126-amino-acid polypeptide reads, in one-letter code: Fatty acid-binding protein 1, liver (126 aa).

The protein belongs to the calycin superfamily. Fatty-acid binding protein (FABP) family.

The protein localises to the cytoplasm. Functionally, binds free fatty acids and their coenzyme A derivatives, bilirubin, and some other small molecules in the cytoplasm. May be involved in intracellular lipid transport. The specificity of axolotl L-FABP differs from that of LB-FABP. This is Fatty acid-binding protein 1, liver from Ambystoma mexicanum (Axolotl).